A 193-amino-acid polypeptide reads, in one-letter code: Rho-related GTP-binding protein RhoA-B (193 aa).

GTP is bound by residues 12–19 (GDGACGKT), 30–37 (FPEVYVPT), 59–63 (DTAGQ), 117–120 (NKKD), and 160–162 (SAK). (Microbial infection) O-linked (GlcNAc) tyrosine; by Yersinia Afp18 glycosylation is present at Y34. The residue at position 190 (C190) is a Cysteine methyl ester. Residue C190 is the site of S-geranylgeranyl cysteine attachment. Positions 191 to 193 (CLL) are cleaved as a propeptide — removed in mature form.

It belongs to the small GTPase superfamily. Rho family. (Microbial infection) Glycosylated at Tyr-34 by Yersinia ruckeri toxin Afp18. Mono-O-GlcNAcylation by Afp18 inhibits RhoA activation by guanine nucleotide exchange factors and blocks RhoA signaling.

It is found in the cell membrane. Regulates a signal transduction pathway linking plasma membrane receptors to the assembly of focal adhesions and actin stress fibers. This Danio rerio (Zebrafish) protein is Rho-related GTP-binding protein RhoA-B.